The following is a 49-amino-acid chain: MRVNITLEHKESGERLYLTSKNKRNTPDRLQLKKYSPKLRKHVIFTEVK.

This sequence belongs to the bacterial ribosomal protein bL33 family.

This is Large ribosomal subunit protein bL33 from Streptococcus suis (strain 98HAH33).